Here is a 449-residue protein sequence, read N- to C-terminus: Asparagine--tRNA ligase (449 aa).

Belongs to the class-II aminoacyl-tRNA synthetase family. As to quaternary structure, homodimer.

The protein resides in the cytoplasm. The enzyme catalyses tRNA(Asn) + L-asparagine + ATP = L-asparaginyl-tRNA(Asn) + AMP + diphosphate + H(+). The polypeptide is Asparagine--tRNA ligase (Desulfotalea psychrophila (strain LSv54 / DSM 12343)).